A 303-amino-acid polypeptide reads, in one-letter code: MTRCDVLVVGGTHGNEINGAWLVDQWRDQHDLLDAAGLSLALEIGNPEARTANRRYVDRDLNRCFTADLLNQGGQEQELQRARQLLAWHGPDGATPCRVALDLHSTTAAMGSCLVVYGRRPADLALAARVQGALGLPIYLHEADAAQTGFLVEQWPCGLVIEVGPVPQGVLDALVVRQTRIALETCCQELAAARAGTGRDPHNLVVHRHLGSVDLPRDQRDCAAAMVHPQLQGQDWRPLMDGAAMFELPRGGTVPLQADEGETWPLFINEAAYAEKRIAFSLTRREVWPIDPSWGQALEQLMG.

Zn(2+) contacts are provided by His13 and Glu16. Substrate-binding positions include Arg55 and 62 to 63 (NR). Residue His104 participates in Zn(2+) binding. Positions 162 and 273 each coordinate substrate.

This sequence belongs to the AspA/AstE family. Aspartoacylase subfamily. The cofactor is Zn(2+).

The catalysed reaction is an N-acyl-L-aspartate + H2O = a carboxylate + L-aspartate. The polypeptide is Probable aspartoacylase (Parasynechococcus marenigrum (strain WH8102)).